Here is a 224-residue protein sequence, read N- to C-terminus: MHKTHSTMSGKSMKVIGVLALQGAFLEHTNHLKRCLAENDYGIKIEIKTVKTPEDLAQCDALIIPGGESTSMSLIAQRTGLYPCLYEFVHNPEKVVWGTCAGLIFLSAQLENESALVKTLGVLKVDVRRNAFGRQAQSFTQKCDFSNFIPGCDNFPATFIRAPVIERILDPIAVKSLYELPVNGKDVVVAATQNHNILVTSFHPELADSDTRFHDWFIRQFVSN.

Position 67-69 (Gly67–Ser69) interacts with L-glutamine. The active-site Nucleophile is the Cys100. Residues Arg129 and Ile160–Arg161 contribute to the L-glutamine site. Catalysis depends on charge relay system residues His203 and Glu205.

It belongs to the glutaminase PdxT/SNO family.

It carries out the reaction aldehydo-D-ribose 5-phosphate + D-glyceraldehyde 3-phosphate + L-glutamine = pyridoxal 5'-phosphate + L-glutamate + phosphate + 3 H2O + H(+). It catalyses the reaction L-glutamine + H2O = L-glutamate + NH4(+). Its pathway is cofactor biosynthesis; pyridoxal 5'-phosphate biosynthesis. Catalyzes the hydrolysis of glutamine to glutamate and ammonia as part of the biosynthesis of pyridoxal 5'-phosphate. The resulting ammonia molecule is channeled to the active site of a SNZ isoform. This is Pyridoxal 5'-phosphate synthase subunit SNO1 (SNO1) from Saccharomyces cerevisiae (strain ATCC 204508 / S288c) (Baker's yeast).